Here is a 122-residue protein sequence, read N- to C-terminus: Small ribosomal subunit protein uS13 (122 aa).

The segment at 89 to 122 (GLRHRRGLPARGQRTKTNARTRKGPRRGVAGKRK) is disordered.

This sequence belongs to the universal ribosomal protein uS13 family. Part of the 30S ribosomal subunit. Forms a loose heterodimer with protein S19. Forms two bridges to the 50S subunit in the 70S ribosome.

In terms of biological role, located at the top of the head of the 30S subunit, it contacts several helices of the 16S rRNA. In the 70S ribosome it contacts the 23S rRNA (bridge B1a) and protein L5 of the 50S subunit (bridge B1b), connecting the 2 subunits; these bridges are implicated in subunit movement. Contacts the tRNAs in the A and P-sites. This chain is Small ribosomal subunit protein uS13, found in Oleidesulfovibrio alaskensis (strain ATCC BAA-1058 / DSM 17464 / G20) (Desulfovibrio alaskensis).